The chain runs to 211 residues: 3,4-dihydroxy-2-butanone 4-phosphate synthase (211 aa).

D-ribulose 5-phosphate is bound by residues 37–38, aspartate 42, 150–154, and glutamate 174; these read RE and RIGHT. Position 38 (glutamate 38) interacts with Mg(2+). Histidine 153 is a binding site for Mg(2+).

It belongs to the DHBP synthase family. Homodimer. Mg(2+) serves as cofactor. Mn(2+) is required as a cofactor.

The catalysed reaction is D-ribulose 5-phosphate = (2S)-2-hydroxy-3-oxobutyl phosphate + formate + H(+). It functions in the pathway cofactor biosynthesis; riboflavin biosynthesis; 2-hydroxy-3-oxobutyl phosphate from D-ribulose 5-phosphate: step 1/1. Its function is as follows. Catalyzes the conversion of D-ribulose 5-phosphate to formate and 3,4-dihydroxy-2-butanone 4-phosphate. In Buchnera aphidicola subsp. Baizongia pistaciae (strain Bp), this protein is 3,4-dihydroxy-2-butanone 4-phosphate synthase.